We begin with the raw amino-acid sequence, 319 residues long: Transcription factor STKL2 (319 aa).

The disordered stretch occupies residues 1–119 (MAPLESPATA…NKKANPQRVW (119 aa)). The span at 21–34 (EIFKSSSEESKPKD) shows a compositional bias: basic and acidic residues. Residues 38-55 (VPSSKTLKSPSAAVNSKT) are compositionally biased toward polar residues. The span at 89-112 (RAGEGSTSRDMHVKRVKKEDDNKK) shows a compositional bias: basic and acidic residues.

This sequence belongs to the GeBP family. Expressed strongly in leaves and flowers, weakly in roots, and very weakly in stems.

Its subcellular location is the nucleus. Functionally, transcription repressor that binds DNA in a sequence-specific manner, 5'-GCCT-3', to regulate the expression of PGR. Acts as a modulatory component for the glucose-triggered developmental leaf growth process. The polypeptide is Transcription factor STKL2 (Arabidopsis thaliana (Mouse-ear cress)).